Reading from the N-terminus, the 221-residue chain is ATP-dependent dethiobiotin synthetase BioD (221 aa).

13-18 (DIGKTY) lines the ATP pocket. Residue threonine 17 participates in Mg(2+) binding. Residue lysine 38 is part of the active site. Serine 42 serves as a coordination point for substrate. ATP-binding positions include aspartate 51, 112-115 (EGSG), and 176-177 (NR). Residues aspartate 51 and glutamate 112 each contribute to the Mg(2+) site.

This sequence belongs to the dethiobiotin synthetase family. Homodimer. Mg(2+) is required as a cofactor.

It is found in the cytoplasm. The catalysed reaction is (7R,8S)-7,8-diammoniononanoate + CO2 + ATP = (4R,5S)-dethiobiotin + ADP + phosphate + 3 H(+). Its pathway is cofactor biosynthesis; biotin biosynthesis; biotin from 7,8-diaminononanoate: step 1/2. In terms of biological role, catalyzes a mechanistically unusual reaction, the ATP-dependent insertion of CO2 between the N7 and N8 nitrogen atoms of 7,8-diaminopelargonic acid (DAPA, also called 7,8-diammoniononanoate) to form a ureido ring. The protein is ATP-dependent dethiobiotin synthetase BioD of Brachyspira hyodysenteriae (strain ATCC 49526 / WA1).